The sequence spans 236 residues: Small ribosomal subunit protein uS3 (236 aa).

The KH type-2 domain maps to 39–107; that stretch reads IRSYVMEELK…ETSLNIVEIR (69 aa). A disordered region spans residues 214 to 236; that stretch reads ASEHRATRNDNSSSSLNRRRESV.

Belongs to the universal ribosomal protein uS3 family. As to quaternary structure, part of the 30S ribosomal subunit. Forms a tight complex with proteins S10 and S14.

In terms of biological role, binds the lower part of the 30S subunit head. Binds mRNA in the 70S ribosome, positioning it for translation. The polypeptide is Small ribosomal subunit protein uS3 (Bartonella bacilliformis (strain ATCC 35685 / KC583 / Herrer 020/F12,63)).